Reading from the N-terminus, the 567-residue chain is Oxygen-dependent choline dehydrogenase (567 aa).

4-33 (DYIIIGAGSAGNVLAARLTEDADVTVLLLE) serves as a coordination point for FAD. The active-site Proton acceptor is H473.

This sequence belongs to the GMC oxidoreductase family. It depends on FAD as a cofactor.

The enzyme catalyses choline + A = betaine aldehyde + AH2. It catalyses the reaction betaine aldehyde + NAD(+) + H2O = glycine betaine + NADH + 2 H(+). It functions in the pathway amine and polyamine biosynthesis; betaine biosynthesis via choline pathway; betaine aldehyde from choline (cytochrome c reductase route): step 1/1. Involved in the biosynthesis of the osmoprotectant glycine betaine. Catalyzes the oxidation of choline to betaine aldehyde and betaine aldehyde to glycine betaine at the same rate. The sequence is that of Oxygen-dependent choline dehydrogenase from Yersinia pseudotuberculosis serotype IB (strain PB1/+).